Here is a 208-residue protein sequence, read N- to C-terminus: V-type ATP synthase subunit E (208 aa).

Belongs to the V-ATPase E subunit family.

Produces ATP from ADP in the presence of a proton gradient across the membrane. The sequence is that of V-type ATP synthase subunit E from Chlamydia felis (strain Fe/C-56) (Chlamydophila felis).